The sequence spans 110 residues: Parvalbumin alpha (110 aa).

Ser-2 carries the post-translational modification N-acetylserine. Residues Ser-2 and Ser-24 each carry the phosphoserine modification. EF-hand domains lie at 39-74 (KSAD…FSPD) and 78-110 (LSAK…VAES). The Ca(2+) site is built by Asp-52, Asp-54, Ser-56, Phe-58, Glu-60, Glu-63, Asp-91, Asp-93, Asp-95, Lys-97, and Glu-102.

It belongs to the parvalbumin family.

Its function is as follows. In muscle, parvalbumin is thought to be involved in relaxation after contraction. It binds two calcium ions. In Macaca fuscata fuscata (Japanese macaque), this protein is Parvalbumin alpha (PVALB).